The following is a 236-amino-acid chain: MPKHGKKYLEQAKLVDRDQVLEAREAMDMVKKLATAKFDETVEVAFRLGVDPRHADQMIRGAVVLPHGTGKSRKVAVFAKGDKAKEAEAAGADAVGAEDLVEKIQGGWLDFDVAVATPDVMGLVGKLGRLLGPKGLMPNPKTGTVTFDVARAIQEIKAGKIEYRVDKTGIIHAPIGKASFDVQKLLENYQTLLDTLIKAKPAAAKGQYIKSITLSSTMSPGVRVNPLKPHALLVQQ.

Belongs to the universal ribosomal protein uL1 family. As to quaternary structure, part of the 50S ribosomal subunit.

In terms of biological role, binds directly to 23S rRNA. The L1 stalk is quite mobile in the ribosome, and is involved in E site tRNA release. Its function is as follows. Protein L1 is also a translational repressor protein, it controls the translation of the L11 operon by binding to its mRNA. The chain is Large ribosomal subunit protein uL1 from Heliobacterium modesticaldum (strain ATCC 51547 / Ice1).